We begin with the raw amino-acid sequence, 347 residues long: KIN17-like protein KLP (347 aa).

The Nuclear localization signal (NLS) motif lies at 222-225 (KRKR).

This sequence belongs to the KIN17 family.

It localises to the cytoplasm. The protein resides in the nucleus. Its function is as follows. May act as repressor of root growth during copper excess and of hypocotyl growth in the dark. The protein is KIN17-like protein KLP of Arabidopsis thaliana (Mouse-ear cress).